A 136-amino-acid polypeptide reads, in one-letter code: MGLLSRLRKREPISIYDKIGGHEAIEVVVEDFYVRVLADDQLSAFFSGTNMSRLKGKQVEFFAAALGGPEPYTGAPMKQVHQGRGITMHHFSLVAGHLADALTAAGVPSETITEILGVIAPLAVDVTSGESTTAPV.

His-81 provides a ligand contact to heme.

Belongs to the truncated hemoglobin family. Group I subfamily. Homodimer. The cofactor is heme.

Its function is as follows. Binds oxygen cooperatively with very high affinity (P(50) = 0.013 mmHg at 20 degrees Celsius) because of a fast combination (25 microM(-1)sec(-1)) and a slow dissociation (0.2 sec(-1)) rate. This chain is Group 1 truncated hemoglobin GlbN (glbN), found in Mycobacterium bovis (strain ATCC BAA-935 / AF2122/97).